The following is an 849-amino-acid chain: Membrane protein-large ribosomal subunit bL9 fusion protein (849 aa).

Residues 1–680 are unknown; that stretch reads MFSKNKHNTK…TQLEGTNIKT (680 aa). Transmembrane regions (helical) follow at residues 11 to 31 and 64 to 84; these read FIVI…FDFQ and IIFF…IISF. A GGDEF domain is found at 214-342; it reads KTLAIAMIAF…GGDQVVVNIE (129 aa). Positions 681 to 849 are large ribosomal subunit protein bL9; the sequence is VTDTLKHFLK…FLNVTERKSK (169 aa).

The protein belongs to the bacterial ribosomal protein bL9 family.

The protein localises to the cell membrane. Functionally, binds to the 23S rRNA. The chain is Membrane protein-large ribosomal subunit bL9 fusion protein from Aster yellows witches'-broom phytoplasma (strain AYWB).